We begin with the raw amino-acid sequence, 311 residues long: 4-diphosphocytidyl-2-C-methyl-D-erythritol kinase (311 aa).

K16 is an active-site residue. 100 to 110 (PIGAGLAGGSS) lines the ATP pocket. D142 is an active-site residue.

The protein belongs to the GHMP kinase family. IspE subfamily.

The enzyme catalyses 4-CDP-2-C-methyl-D-erythritol + ATP = 4-CDP-2-C-methyl-D-erythritol 2-phosphate + ADP + H(+). Its pathway is isoprenoid biosynthesis; isopentenyl diphosphate biosynthesis via DXP pathway; isopentenyl diphosphate from 1-deoxy-D-xylulose 5-phosphate: step 3/6. Its function is as follows. Catalyzes the phosphorylation of the position 2 hydroxy group of 4-diphosphocytidyl-2C-methyl-D-erythritol. The sequence is that of 4-diphosphocytidyl-2-C-methyl-D-erythritol kinase from Prochlorococcus marinus (strain MIT 9301).